The chain runs to 508 residues: MDASSLVKRGSSTHYANLPYGYYVLGVIVFYTIFLIVMRWLIPSRYTKVSPWKNKLLQSIRTASPCFHMPLLLLLVFVPFIHKYSLVAYISLYLKRLGRLSYVLVILNVLLTLRPANPILGYHYLDLIPLHKWLSRFVTVIGIIHGIGFIVKWSLDPKVSMISKATKLFNFIGVIAFVPLFILMFASVRIWRRYSYRSFYVIHQLGQWAMVFLVPIHARPRVTVPYFFILLALYIWRGISYIYYSTTVNVTQRVKDDTSLTYVKLDRSAIRDWLPGSHLRLSKYKKKNPLYWLMPTQPYTIASLPDESQIDLIIRENLTPYVVVGEYTVVDVYSTVPPSLLYDSQRVAIVVGGSGISFGLSIFKYLQTRNLDYLKFIWLIREREDMHILNHCNFETNDLEVYVTRSLPPDDTQTKSMNANGSSEFDDIDFELETMDESGALLTNDSKSPSLVHFGRRLDWQVDLAQFIESHALQNSWLVCCGPESLLTDGERYAKQNYCNFVKEFYDI.

A run of 8 helical transmembrane segments spans residues 18-38 (LPYGYYVLGVIVFYTIFLIVM), 70-90 (PLLLLLVFVPFIHKYSLVAYI), 100-120 (LSYVLVILNVLLTLRPANPIL), 137-157 (FVTVIGIIHGIGFIVKWSLDP), 168-188 (LFNFIGVIAFVPLFILMFASV), 198-218 (SFYVIHQLGQWAMVFLVPIHA), 222-242 (VTVPYFFILLALYIWRGISYI), and 347-367 (VAIVVGGSGISFGLSIFKYLQ). The Ferric oxidoreductase domain occupies 97–214 (LGRLSYVLVI…LGQWAMVFLV (118 aa)). Positions 241–361 (YIYYSTTVNV…GGSGISFGLS (121 aa)) constitute an FAD-binding FR-type domain.

It belongs to the ferric reductase (FRE) family. AIM14 subfamily.

The protein resides in the membrane. Probable cell surface metalloreductase. May be involved in iron or copper homeostasis. The protein is Probable metalloreductase AIM14 (AIM14) of Kluyveromyces lactis (strain ATCC 8585 / CBS 2359 / DSM 70799 / NBRC 1267 / NRRL Y-1140 / WM37) (Yeast).